The primary structure comprises 540 residues: MTDEGPGMCWCLRRCGRNTEDLLLPDGEEVTLGRGLGVTYQLKPTLCPLMISRTHCLFKQNTGGEWTVTDNKSLNGVWRNKERLEPHKAYTLSEGALIQLGVPPPNMESAEFEYMLVREHLEKLSGSLIRPLPDKTKATRTKRKFTSEDTDASGNEGPSNFSIPKFYRVSREDEDSAKSSHTTDLYKQPTVEPTASGTESRLNDSVEAEVVAPTQQQCRSTLQLSRVRQTMEEIRRLNVQMQEKQMEMQEKLNSPLENQVGANSVLAVQKELRALHNHLSNEQEQHMQSVKELKEIFEEEQQSMGSRKQVEEEHLKEQLAQALQEHTQLMQELNRSKNDFEQIIEAKNKELQETKEEKEKVFAQKEEVLNHMNDVLDNELQCIICSEHFIEAVTLNCAHSFCSYCIKSWKKRKEECPICRQEIVTETRSLVLDNCIDSMVDKLSPEMKNRRAALILERKEMVQAEESNPVLVVSDSSSFLSDTFYISSSSSDSDELGNDFWMRSEEEEYEETLFGCGTDELDSSDFESDDDEEEDSFLII.

Residues 30 to 84 (VTLGRGLGVTYQLKPTLCPLMISRTHCLFKQNTGGEWTVTDNKSLNGVWRNKERL) enclose the FHA domain. The interval 128–205 (LIRPLPDKTK…SGTESRLNDS (78 aa)) is disordered. 2 stretches are compositionally biased toward polar residues: residues 152-162 (ASGNEGPSNFS) and 179-200 (SSHT…GTES). An RING-type zinc finger spans residues 382–420 (CIICSEHFIEAVTLNCAHSFCSYCIKSWKKRKEECPICR). The interval 517–540 (GTDELDSSDFESDDDEEEDSFLII) is disordered. Over residues 519–540 (DELDSSDFESDDDEEEDSFLII) the composition is skewed to acidic residues.

This sequence belongs to the RNF8 family. In terms of assembly, homodimer. Forms a E2-E3 ubiquitin ligase complex composed of the rnf8 homodimer and a E2 heterodimer of ube2n and ube2v2.

The protein localises to the nucleus. The enzyme catalyses S-ubiquitinyl-[E2 ubiquitin-conjugating enzyme]-L-cysteine + [acceptor protein]-L-lysine = [E2 ubiquitin-conjugating enzyme]-L-cysteine + N(6)-ubiquitinyl-[acceptor protein]-L-lysine.. It participates in protein modification; protein ubiquitination. In terms of biological role, E3 ubiquitin-protein ligase that plays a key role in DNA damage signaling via 2 distinct roles: by mediating the 'Lys-63'-linked ubiquitination of histones H2A and H2AX and promoting the recruitment of DNA repair proteins at double-strand breaks (DSBs) sites, and by catalyzing 'Lys-48'-linked ubiquitination to remove target proteins from DNA damage sites. Following DNA DSBs, it is recruited to the sites of damage by ATM-phosphorylated mdc1 and catalyzes the 'Lys-63'-linked ubiquitination of histones H2A and H2AX, thereby promoting the formation of tp53bp1 and brca1 ionizing radiation-induced foci (IRIF). H2A ubiquitination also mediates the ATM-dependent transcriptional silencing at regions flanking DSBs in cis, a mechanism to avoid collision between transcription and repair intermediates. Also catalyzes the formation of 'Lys-48'-linked polyubiquitin chains, leading to degradation of substrate proteins. In addition to its function in damage signaling, also plays a role in higher-order chromatin structure by mediating extensive chromatin decondensation. This Xenopus laevis (African clawed frog) protein is E3 ubiquitin-protein ligase rnf8-A.